Here is a 690-residue protein sequence, read N- to C-terminus: Protein arginine N-methyltransferase 7 (690 aa).

2 SAM-dependent MTase PRMT-type domains span residues 14–357 and 366–690; these read QNSW…YSLW and TKSV…QKKL.

Belongs to the class I-like SAM-binding methyltransferase superfamily. Protein arginine N-methyltransferase family. PRMT7 subfamily.

In terms of biological role, essential arginine methyltransferase that can both catalyze the formation of omega-N monomethylarginine (MMA) and symmetrical dimethylarginine (sDMA). Specifically mediates the symmetrical dimethylation of arginine residues in the small nuclear ribonucleoproteins SmD1 and SmD3. The chain is Protein arginine N-methyltransferase 7 (Art7) from Drosophila sechellia (Fruit fly).